Reading from the N-terminus, the 133-residue chain is Ribosome-binding factor A (133 aa).

The protein belongs to the RbfA family. In terms of assembly, monomer. Binds 30S ribosomal subunits, but not 50S ribosomal subunits or 70S ribosomes.

Its subcellular location is the cytoplasm. Functionally, one of several proteins that assist in the late maturation steps of the functional core of the 30S ribosomal subunit. Associates with free 30S ribosomal subunits (but not with 30S subunits that are part of 70S ribosomes or polysomes). Required for efficient processing of 16S rRNA. May interact with the 5'-terminal helix region of 16S rRNA. The chain is Ribosome-binding factor A from Acinetobacter baumannii (strain ACICU).